The sequence spans 117 residues: Aspartate 1-decarboxylase (117 aa).

The Schiff-base intermediate with substrate; via pyruvic acid role is filled by S25. S25 is subject to Pyruvic acid (Ser). T57 contacts substrate. The Proton donor role is filled by Y58. 72–74 (GAA) is a binding site for substrate.

This sequence belongs to the PanD family. As to quaternary structure, heterooctamer of four alpha and four beta subunits. Requires pyruvate as cofactor. Is synthesized initially as an inactive proenzyme, which is activated by self-cleavage at a specific serine bond to produce a beta-subunit with a hydroxyl group at its C-terminus and an alpha-subunit with a pyruvoyl group at its N-terminus.

The protein resides in the cytoplasm. The enzyme catalyses L-aspartate + H(+) = beta-alanine + CO2. The protein operates within cofactor biosynthesis; (R)-pantothenate biosynthesis; beta-alanine from L-aspartate: step 1/1. Functionally, catalyzes the pyruvoyl-dependent decarboxylation of aspartate to produce beta-alanine. The chain is Aspartate 1-decarboxylase from Helicobacter pylori (strain ATCC 700392 / 26695) (Campylobacter pylori).